Reading from the N-terminus, the 362-residue chain is EARP-interacting protein 1 (362 aa).

WD repeat units follow at residues 61 to 108 (HPAG…RTLE), 206 to 246 (AHIH…SALT), 250 to 290 (PHAH…SEQQ), and 319 to 359 (EHED…KYAL).

Belongs to the WD repeat EIPR1 family. In terms of tissue distribution, expressed in the hypodermis and the pharynx.

It is found in the cytoplasm. In terms of biological role, plays a role in the trafficking of cargo to dense-core vesicles, probably through association with the endosome-associated recycling protein (EARP) complex. Important for neuronal function. This is EARP-interacting protein 1 from Caenorhabditis elegans.